The following is a 406-amino-acid chain: Putative gustatory receptor 59f (406 aa).

At 1–36 (MRSSATKGAKLKNSPRERLSSFNPQYAERYKELYRT) the chain is on the cytoplasmic side. Residues 37-57 (LFWLLLISVLANTAPITILPG) traverse the membrane as a helical segment. The Extracellular segment spans residues 58-69 (CPNRFYRLVHLS). The chain crosses the membrane as a helical span at residues 70–90 (WMILWYGLFVLGSYWEFVLVT). Over 91 to 99 (TQRVSLDRY) the chain is Cytoplasmic. The helical transmembrane segment at 100–120 (LNAIESAIYVVHIFSIMLLTW) threads the bilayer. Topologically, residues 121 to 154 (QCRNWAPKLMTNIVTSDLNRAYTIDCNRTKRFIR) are extracellular. A glycan (N-linked (GlcNAc...) asparagine) is linked at Asn-147. Residues 155–175 (LQLFLVGIFACLAIFFNIWTH) traverse the membrane as a helical segment. At 176–189 (KFVVYRSILSINSY) the chain is on the cytoplasmic side. The chain crosses the membrane as a helical span at residues 190 to 210 (VMPNIISSISFAQYYLLLQGI). At 211–259 (AWRQRRLTEGLERELTHLHSPRISEVQKIRMHHANLIDFTKAVNRTFQY) the chain is on the extracellular side. Asn-254 is a glycosylation site (N-linked (GlcNAc...) asparagine). The chain crosses the membrane as a helical span at residues 260 to 280 (SILLLFVGCFLNFNLVLFLVY). Residues 281–364 (QGIENPSMAD…RQHVVCGVIN (84 aa)) lie on the Cytoplasmic side of the membrane. The chain crosses the membrane as a helical span at residues 365 to 385 (LDLKFLTTLLVASADFFIFLL). At 386–406 (QYDVTYEALSKSVQGNVTRYK) the chain is on the extracellular side. Asn-401 is a glycosylation site (N-linked (GlcNAc...) asparagine).

Belongs to the insect chemoreceptor superfamily. Gustatory receptor (GR) family. Gr10a subfamily. As to expression, expressed in the adult abdomen and wing. In larvae, is expressed in neurons of the terminal external chemosensory organ.

The protein resides in the cell membrane. Probable gustatory receptor which mediates acceptance or avoidance behavior, depending on its substrates. This is Putative gustatory receptor 59f (Gr59f) from Drosophila melanogaster (Fruit fly).